We begin with the raw amino-acid sequence, 957 residues long: Iron-responsive element-binding protein 2 (957 aa).

Residues cysteine 506, cysteine 572, and cysteine 575 each contribute to the [4Fe-4S] cluster site.

This sequence belongs to the aconitase/IPM isomerase family. Requires [4Fe-4S] cluster as cofactor. In terms of processing, ubiquitinated and degraded by the proteasome in presence of high level of iron and oxygen.

It is found in the cytoplasm. Its function is as follows. RNA-binding protein that binds to iron-responsive elements (IRES), which are stem-loop structures found in the 5'-UTR of ferritin, and delta aminolevulinic acid synthase mRNAs, and in the 3'-UTR of transferrin receptor mRNA. Binding to the IRE element in ferritin results in the repression of its mRNA translation. Binding of the protein to the transferrin receptor mRNA inhibits the degradation of this otherwise rapidly degraded mRNA. This chain is Iron-responsive element-binding protein 2 (ireb2), found in Xenopus tropicalis (Western clawed frog).